A 266-amino-acid chain; its full sequence is MKEIKVIIAGPRGRMGHEAVLLMERTEHFNLVAAVDYKHGGEKISDLPGMPALDAPIYADLHTCLEEVEADVLLDLTTPEVGKQHVTLAVERGLRSVIGTTGFTEEELKQLTEIAKEKAVGTIIAPNFAIGAVLMMKFSQMAAKYFQDVEVIELHHDQKLDAPSGTAVKTVELIRQNRESKQQGHPNEVEQLEGARGANVDGIHIHSVRLPGLIAHQEVMFGGDGQMLTVRHDSFNRASFMSGVKLSIETVMNLDHLVYGLENIID.

10–15 (GPRGRM) contacts NAD(+). Position 38 (Lys38) interacts with NADP(+). Residues 99–101 (GTT) and 125–128 (APNF) each bind NAD(+). The active-site Proton donor/acceptor is the His155. Residue His156 participates in (S)-2,3,4,5-tetrahydrodipicolinate binding. The active-site Proton donor is Lys159. Position 165–166 (165–166 (GT)) interacts with (S)-2,3,4,5-tetrahydrodipicolinate.

This sequence belongs to the DapB family.

The protein resides in the cytoplasm. The enzyme catalyses (S)-2,3,4,5-tetrahydrodipicolinate + NAD(+) + H2O = (2S,4S)-4-hydroxy-2,3,4,5-tetrahydrodipicolinate + NADH + H(+). It catalyses the reaction (S)-2,3,4,5-tetrahydrodipicolinate + NADP(+) + H2O = (2S,4S)-4-hydroxy-2,3,4,5-tetrahydrodipicolinate + NADPH + H(+). It participates in amino-acid biosynthesis; L-lysine biosynthesis via DAP pathway; (S)-tetrahydrodipicolinate from L-aspartate: step 4/4. Functionally, catalyzes the conversion of 4-hydroxy-tetrahydrodipicolinate (HTPA) to tetrahydrodipicolinate. The chain is 4-hydroxy-tetrahydrodipicolinate reductase from Bacillus cereus (strain ZK / E33L).